Here is a 392-residue protein sequence, read N- to C-terminus: N-acyl-phosphatidylethanolamine-hydrolyzing phospholipase D (392 aa).

Residue Met1 is modified to N-acetylmethionine. Polar residues predominate over residues 1-16 (MDENETNQLLMTSNQY). Residues 1-39 (MDENETNQLLMTSNQYPKEAVRKRQNSRNSGGSDSSRFS) form a disordered region. Residues 27 to 36 (SRNSGGSDSS) show a composition bias toward low complexity. Residues His183 and His185 each contribute to the Zn(2+) site. Tyr186 is an an N-acyl-1,2-diacyl-sn-glycero-3-phosphoethanolamine binding site. Zn(2+) contacts are provided by Asp187, His188, and His251. Residues Lys254 and Met258 each contribute to the deoxycholate site. A Zn(2+)-binding site is contributed by Asp282. His319 is an an N-acyl-1,2-diacyl-sn-glycero-3-phosphoethanolamine binding site. Zn(2+) is bound at residue His341. Ala346 provides a ligand contact to deoxycholate.

This sequence belongs to the NAPE-PLD family. Homodimer. Bile acids promote the assembly of inactive monomers into an active dimer and enable catalysis. Zn(2+) serves as cofactor. Widely expressed. Highest expression in brain, kidney and testis (at protein level). Expressed in adipose tissue (at protein level).

The protein localises to the golgi apparatus membrane. Its subcellular location is the early endosome membrane. It is found in the nucleus envelope. The protein resides in the nucleus. It localises to the nucleoplasm. The enzyme catalyses an N-acyl-1,2-diacyl-sn-glycero-3-phosphoethanolamine + H2O = an N-acylethanolamine + a 1,2-diacyl-sn-glycero-3-phosphate + H(+). The catalysed reaction is N-butanoyl-1-hexadecanoyl-2-(9Z,12Z-octadecadienoyl)-sn-glycero-3-phosphoethanolamine + H2O = N-butanoyl ethanolamine + 1-hexadecanoyl-2-(9Z,12Z-octadecadienoyl)-sn-glycero-3-phosphate + H(+). It catalyses the reaction N-hexanoyl-1-hexadecanoyl-2-(9Z,12Z-octadecadienoyl)-sn-glycero-3-phosphoethanolamine + H2O = N-hexanoyl ethanolamine + 1-hexadecanoyl-2-(9Z,12Z-octadecadienoyl)-sn-glycero-3-phosphate + H(+). It carries out the reaction N-octanoyl-1-hexadecanoyl-2-(9Z,12Z-octadecadienoyl)-sn-glycero-3-phosphoethanolamine + H2O = N-octanoyl ethanolamine + 1-hexadecanoyl-2-(9Z,12Z-octadecadienoyl)-sn-glycero-3-phosphate + H(+). The enzyme catalyses N-decanoyl-1-hexadecanoyl-2-(9Z,12Z-octadecadienoyl)-sn-glycero-3-phosphoethanolamine + H2O = N-decanoyl ethanolamine + 1-hexadecanoyl-2-(9Z,12Z-octadecadienoyl)-sn-glycero-3-phosphate + H(+). The catalysed reaction is N-dodecanoyl-1,2-di-(9Z-octadecenoyl)-sn-glycero-3-phosphoethanolamine + H2O = N-dodecanoylethanolamine + 1,2-di-(9Z-octadecenoyl)-sn-glycero-3-phosphate + H(+). It catalyses the reaction N-tetradecanoyl-1,2-di-(9Z-octadecenoyl)-sn-glycero-3-phosphoethanolamine + H2O = N-tetradecanoylethanolamine + 1,2-di-(9Z-octadecenoyl)-sn-glycero-3-phosphate + H(+). It carries out the reaction N-hexadecanoyl-1,2-di-(9Z-octadecenoyl)-sn-glycero-3-phosphoethanolamine + H2O = N-hexadecanoylethanolamine + 1,2-di-(9Z-octadecenoyl)-sn-glycero-3-phosphate + H(+). The enzyme catalyses N,1-dihexadecanoyl-2-(9Z,12Z-octadecadienoyl)-sn-glycero-3-phosphoethanolamine + H2O = 1-hexadecanoyl-2-(9Z,12Z-octadecadienoyl)-sn-glycero-3-phosphate + N-hexadecanoylethanolamine + H(+). The catalysed reaction is N-octadecanoyl-1,2-di-(9Z-octadecenoyl)-sn-glycero-3-phosphoethanolamine + H2O = N-octadecanoyl ethanolamine + 1,2-di-(9Z-octadecenoyl)-sn-glycero-3-phosphate + H(+). It catalyses the reaction N,1,2-tri-(9Z-octadecenoyl)-sn-glycero-3-phosphoethanolamine + H2O = N-(9Z-octadecenoyl) ethanolamine + 1,2-di-(9Z-octadecenoyl)-sn-glycero-3-phosphate + H(+). It carries out the reaction N-(5Z,8Z,11Z,14Z-eicosatetraenoyl)-1,2-diacyl-sn-glycero-3-phosphoethanolamine + H2O = N-(5Z,8Z,11Z,14Z-eicosatetraenoyl)-ethanolamine + a 1,2-diacyl-sn-glycero-3-phosphate + H(+). The enzyme catalyses N-(5Z,8Z,11Z,14Z-eicosatetraenoyl)-1,2-di-(9Z-octadecenoyl)-sn-glycero-3-phosphoethanolamine + H2O = N-(5Z,8Z,11Z,14Z-eicosatetraenoyl)-ethanolamine + 1,2-di-(9Z-octadecenoyl)-sn-glycero-3-phosphate + H(+). The catalysed reaction is 1-O-(1Z-octadecenoyl)-2-(9Z-octadecenoyl)-sn-glycero-3-phospho-N-hexadecanoyl-ethanolamine + H2O = 1-O-(1Z-octadecenoyl)-2-(9Z-octadecenoyl)-sn-glycero-3-phosphate + N-hexadecanoylethanolamine + H(+). It catalyses the reaction N,1-diacyl-sn-glycero-3-phosphoethanolamine + H2O = an N-acylethanolamine + a 1-acyl-sn-glycero-3-phosphate + H(+). It carries out the reaction N,1-dihexadecanoyl-sn-glycero-3-phosphoethanolamine + H2O = N-hexadecanoylethanolamine + 1-hexadecanoyl-sn-glycero-3-phosphate + H(+). The enzyme catalyses N-(5Z,8Z,11Z,14Z-eicosatetraenoyl)-1-(9Z-octadecenoyl)-sn-glycero-3-phosphoethanolamine + H2O = N-(5Z,8Z,11Z,14Z-eicosatetraenoyl)-ethanolamine + 1-(9Z-octadecenoyl)-sn-glycero-3-phosphate + H(+). With respect to regulation, activated by divalent cations. Activated by bile acids. Its function is as follows. D-type phospholipase that hydrolyzes N-acyl-phosphatidylethanolamines (NAPEs) to produce bioactive N-acylethanolamines/fatty acid ethanolamides (NAEs/FAEs) and phosphatidic acid. Cleaves the terminal phosphodiester bond of diacyl- and alkenylacyl-NAPEs, primarily playing a role in the generation of long-chain saturated and monounsaturated NAEs in the brain. May control NAPE homeostasis in dopaminergic neuron membranes and regulate neuron survival, partly through RAC1 activation. As a regulator of lipid metabolism in the adipose tissue, mediates the crosstalk between adipocytes, gut microbiota and immune cells to control body temperature and weight. In particular, regulates energy homeostasis by promoting cold-induced brown or beige adipocyte differentiation program to generate heat from fatty acids and glucose. Has limited D-type phospholipase activity toward N-acyl lyso-NAPEs. This is N-acyl-phosphatidylethanolamine-hydrolyzing phospholipase D (NAPEPLD) from Bos taurus (Bovine).